Consider the following 256-residue polypeptide: Hemin import ATP-binding protein HmuV (256 aa).

Positions 2–239 (IHAFAVSVIR…ANVREVYQVD (238 aa)) constitute an ABC transporter domain. 34–41 (GPNGAGKS) contacts ATP.

It belongs to the ABC transporter superfamily. Heme (hemin) importer (TC 3.A.1.14.5) family. The complex is composed of two ATP-binding proteins (HmuV), two transmembrane proteins (HmuU) and a solute-binding protein (HmuT).

The protein resides in the cell inner membrane. Functionally, part of the ABC transporter complex HmuTUV involved in hemin import. Responsible for energy coupling to the transport system. The sequence is that of Hemin import ATP-binding protein HmuV from Hahella chejuensis (strain KCTC 2396).